Consider the following 204-residue polypeptide: Tetraspanin-13 (204 aa).

Over 1-19 (MVCGGFSCSKNCLCALNLL) the chain is Cytoplasmic. A helical membrane pass occupies residues 20-40 (YTLVSLLLIGIAAWGIGFGLI). At 41 to 44 (SSLR) the chain is on the extracellular side. Residues 45-65 (VVGVVIAVGIFLFLIALVGLI) form a helical membrane-spanning segment. The Cytoplasmic segment spans residues 66–72 (GAVKHHQ). The chain crosses the membrane as a helical span at residues 73–93 (VLLFFYMIILLLVFIVQFSVS). The Extracellular portion of the chain corresponds to 94-167 (CACLALNREQ…IGEYAGEVLR (74 aa)). N-linked (GlcNAc...) asparagine glycosylation is found at Asn-113 and Asn-137. The residue at position 143 (Ser-143) is a Phosphoserine. The helical transmembrane segment at 168–188 (FVGGIGLFFSFTEILGVWLTY) threads the bilayer. Topologically, residues 189–204 (RYRNQKDPRANPSAFL) are cytoplasmic.

Belongs to the tetraspanin (TM4SF) family.

The protein resides in the membrane. The polypeptide is Tetraspanin-13 (Tspan13) (Mus musculus (Mouse)).